A 563-amino-acid chain; its full sequence is Group II intron-interrupted relaxase LtrB (563 aa).

Tyr-44 is an active-site residue. 2 residues coordinate Mg(2+): His-159 and His-161.

It belongs to the mobilization (MOB) protein type 1 family. Mg(2+) serves as cofactor. It depends on Mn(2+) as a cofactor.

Its function is as follows. Mediates initiation of conjugal transfer possibly by introducing a single-stranded nick at the potential origin of transfer. This chain is Group II intron-interrupted relaxase LtrB (ltrBE1), found in Lactococcus lactis subsp. cremoris (strain MG1363).